Here is a 107-residue protein sequence, read N- to C-terminus: Small ribosomal subunit protein uS17 (107 aa).

The protein belongs to the universal ribosomal protein uS17 family. As to quaternary structure, part of the 30S ribosomal subunit.

In terms of biological role, one of the primary rRNA binding proteins, it binds specifically to the 5'-end of 16S ribosomal RNA. The sequence is that of Small ribosomal subunit protein uS17 from Aquifex aeolicus (strain VF5).